The sequence spans 865 residues: MTSATSPILLKWDPKSLEIRTLTVERLLEPLVTQVTTLVNTSNKGPSSKKKGRSKKAHVLAVSVEQATQNFLEKGEQIAKDSQDLKEELIAAVEDVRKQGDTMRVASSEFADDPCSSVKRGTMVRAARALLSAVTRLLILADMADVMRLLAHLKIELKDPQCRDEMAAARGALKKNATMLYTASQAFLRHPDVAATRANRDYVFKQVQEAIGGISSSAQATSPTDEKHGHAGIGELAAALNEFDNKIILDPLTFSEARFRPSLEERLESIISGAALMADSSCTRDDRRERIVAECNAVRQALQDLLSEYMNNTGRKEKGDPLNSAIDKMTKKTRDLRRQLRKAVMDHISDSFLETNVPLLVLIEAAKSGNEKEVKEYAQVFREHANKLVEVANLACSISNNEEGVKLVRMAATQIDSLCPQVINAALTLAARPQSKVAQDNMDVFKDQWEKQVRILTEAVDDITSVDDFLSVSENHILEDVNKCVIALQEGDVDTLDRTAGAIRGRAARVVHIINAEMENYEPGVYTERVLESIKLLSETVMPRFAEQVEVAIEALSTSPPQPFEENEFIDASRLVYDGVRDIRKAVLMIRTPEELEDDSDFEQEDYDARSRTSIQTEDDQLIAGQSARAIMAQLPQEEKAKIAEQVESFRQEKSKLDAEVAKWDDNGNDIIVLAKQMCMIMMEMTDFTRGKGPLKNSSDVINAAKKIAEAGSRMDKLARAVADQCPDSACKQDLLAYLQRIALYCHQLNICSKVKAEVQNLGGELIVSGLDSATSLIQAAKNLMNAVVLTVKASYVASTKYQKVYGTAAVNSPVVSWRMKAPEKKPLVKREKPEECQTRVRRGSQKKHISPVQALSEFKAMDSF.

Residues 823–839 (PEKKPLVKREKPEECQT) are compositionally biased toward basic and acidic residues. A disordered region spans residues 823–851 (PEKKPLVKREKPEECQTRVRRGSQKKHIS). Residues 840–850 (RVRRGSQKKHI) are compositionally biased toward basic residues.

The protein belongs to the vinculin/alpha-catenin family.

Its subcellular location is the cell membrane. The protein localises to the cytoplasm. It localises to the cytoskeleton. The protein resides in the cell junction. It is found in the adherens junction. Its subcellular location is the cell projection. The protein localises to the axon. It localises to the nucleus. In terms of biological role, may function as a linker between cadherin adhesion receptors and the cytoskeleton to regulate cell-cell adhesion and differentiation in the nervous system. In Danio rerio (Zebrafish), this protein is Catenin alpha-2 (Ctnna2).